Consider the following 327-residue polypeptide: Ankyrin repeat domain-containing protein SOWAHD (327 aa).

The interval 1–31 (MAQALEDGNPLPKASNRPAESEAPSDPQIKD) is disordered. ANK repeat units lie at residues 112-141 (CLEPREHAWILAAAECRFEVLLEMLEAEPS), 147-162 (DPITGYSVLHWLAKHG), and 186-216 (PGSGGLTPLHLAALQGHDMVIKVLVGALGAD). Residues 251 to 311 (ERDRKRENAN…EKKASSTQEG (61 aa)) are disordered. Positions 260-275 (NNNSSRTTTTTTTTSR) are enriched in low complexity. Over residues 292-305 (HYKEASQPVKEKKA) the composition is skewed to basic and acidic residues.

Belongs to the SOWAH family.

This is Ankyrin repeat domain-containing protein SOWAHD (Sowahd) from Mus musculus (Mouse).